The chain runs to 479 residues: Cruciferin PGCRURSE5 (479 aa).

Positions 1-23 (MVKLAHLLVATFGVLLVLNGCLA) are cleaved as a signal peptide. Disulfide bonds link Cys37–Cys70 and Cys113–Cys296. Residues 42–241 (LDVLQPTETI…ALKMQLRLAQ (200 aa)) form the Cupin type-1 1 domain. Residue Thr116 is modified to Phosphothreonine. Disordered stretches follow at residues 117-144 (FMDS…GFRD), 196-219 (RTFR…QQQN), and 271-291 (YESE…DNGL). Low complexity predominate over residues 124 to 141 (QGQGQQGQQGQQGQQQQG). Positions 302–451 (ENIDDPARAD…AFQISLEEAR (150 aa)) constitute a Cupin type-1 2 domain. Thr415 and Thr440 each carry phosphothreonine.

This sequence belongs to the 11S seed storage protein (globulins) family. In terms of assembly, hexamer; each subunit is composed of an acidic and a basic chain derived from a single precursor and linked by a disulfide bond.

Functionally, this is a seed storage protein. This Raphanus sativus (Radish) protein is Cruciferin PGCRURSE5 (CRURS).